A 160-amino-acid polypeptide reads, in one-letter code: Cytochrome b6-f complex subunit 4 (160 aa).

Helical transmembrane passes span 36-56, 95-115, and 131-151; these read LLYI…GLAV, LLGI…PFIE, and AVFL…TLPI.

This sequence belongs to the cytochrome b family. PetD subfamily. The 4 large subunits of the cytochrome b6-f complex are cytochrome b6, subunit IV (17 kDa polypeptide, PetD), cytochrome f and the Rieske protein, while the 4 small subunits are PetG, PetL, PetM and PetN. The complex functions as a dimer.

It localises to the cellular thylakoid membrane. Its function is as follows. Component of the cytochrome b6-f complex, which mediates electron transfer between photosystem II (PSII) and photosystem I (PSI), cyclic electron flow around PSI, and state transitions. This is Cytochrome b6-f complex subunit 4 from Trichodesmium erythraeum (strain IMS101).